The sequence spans 572 residues: Phosphoglucomutase-1 (572 aa).

Substrate is bound by residues threonine 23, arginine 27, 126 to 127 (SH), and lysine 140. Serine 126 acts as the Phosphoserine intermediate in catalysis. Serine 126 is a binding site for Mg(2+). Mg(2+)-binding residues include aspartate 308, aspartate 310, and aspartate 312. Substrate is bound by residues 312-313 (DR), threonine 373, 392-394 (EES), lysine 405, and arginine 527.

This sequence belongs to the phosphohexose mutase family. The cofactor is Mg(2+). In terms of processing, phosphorylated via a calcium-dependent protein kinase. Very rapidly (within 80 ms) dephosphorylated during triggered trichocyst exocytosis. O-glycosylated with a short chain of mannose residues.

It is found in the cytoplasm. It catalyses the reaction alpha-D-glucose 1-phosphate = alpha-D-glucose 6-phosphate. May be involved in membrane fusion in exocytosis. The chain is Phosphoglucomutase-1 (pp63-1) from Paramecium tetraurelia.